A 192-amino-acid chain; its full sequence is UPF0312 protein ECA1782 (192 aa).

An N-terminal signal peptide occupies residues 1–23 (MLKKTLLSLTAVSMLASAGSALA).

The protein belongs to the UPF0312 family. Type 1 subfamily.

Its subcellular location is the periplasm. The protein is UPF0312 protein ECA1782 of Pectobacterium atrosepticum (strain SCRI 1043 / ATCC BAA-672) (Erwinia carotovora subsp. atroseptica).